The sequence spans 1011 residues: Protein translocase subunit SecA, chloroplastic (1011 aa).

Over residues 1-17 (MATSSLCSSFTSQTCNP) the composition is skewed to polar residues. Positions 1-22 (MATSSLCSSFTSQTCNPHSRPH) are disordered. Residues 1–59 (MATSSLCSSFTSQTCNPHSRPHRKTLTLPGSVFLCRQFHLNSPSVSKTRRIRTRQSGPV) constitute a chloroplast transit peptide. 164-171 (MRTGEGKT) contributes to the ATP binding site. Residues 976-1011 (QDKMENQKSGKRNARPPTDTNPDPVGTVEPSTSASS) are disordered.

It belongs to the SecA family.

The protein localises to the plastid. The protein resides in the chloroplast stroma. Its subcellular location is the chloroplast thylakoid membrane. It carries out the reaction ATP + H2O + chloroplast-proteinSide 1 = ADP + phosphate + chloroplast-proteinSide 2.. Has a central role in coupling the hydrolysis of ATP to the transfer of proteins across the thylakoid membrane. Facilitates the transport of precursor proteins from the chloroplast stroma to thylakoid lumen. The chain is Protein translocase subunit SecA, chloroplastic from Pisum sativum (Garden pea).